The chain runs to 429 residues: Gamma-glutamyl phosphate reductase (429 aa).

The protein belongs to the gamma-glutamyl phosphate reductase family.

Its subcellular location is the cytoplasm. It catalyses the reaction L-glutamate 5-semialdehyde + phosphate + NADP(+) = L-glutamyl 5-phosphate + NADPH + H(+). It participates in amino-acid biosynthesis; L-proline biosynthesis; L-glutamate 5-semialdehyde from L-glutamate: step 2/2. Catalyzes the NADPH-dependent reduction of L-glutamate 5-phosphate into L-glutamate 5-semialdehyde and phosphate. The product spontaneously undergoes cyclization to form 1-pyrroline-5-carboxylate. In Methylibium petroleiphilum (strain ATCC BAA-1232 / LMG 22953 / PM1), this protein is Gamma-glutamyl phosphate reductase.